The chain runs to 143 residues: Acetyltransferase plu1384 (143 aa).

The N-acetyltransferase domain occupies 1-138; sequence MEIRVFRQDD…ESVIFSKRLI (138 aa).

It belongs to the acetyltransferase family. YpeA subfamily.

This is Acetyltransferase plu1384 from Photorhabdus laumondii subsp. laumondii (strain DSM 15139 / CIP 105565 / TT01) (Photorhabdus luminescens subsp. laumondii).